The primary structure comprises 156 residues: Ribosomal RNA large subunit methyltransferase H (156 aa).

Residues L73, G104, and L123 to L128 contribute to the S-adenosyl-L-methionine site.

This sequence belongs to the RNA methyltransferase RlmH family. Homodimer.

Its subcellular location is the cytoplasm. It carries out the reaction pseudouridine(1915) in 23S rRNA + S-adenosyl-L-methionine = N(3)-methylpseudouridine(1915) in 23S rRNA + S-adenosyl-L-homocysteine + H(+). Its function is as follows. Specifically methylates the pseudouridine at position 1915 (m3Psi1915) in 23S rRNA. The sequence is that of Ribosomal RNA large subunit methyltransferase H from Neisseria meningitidis serogroup C (strain 053442).